We begin with the raw amino-acid sequence, 102 residues long: Putative pterin-4-alpha-carbinolamine dehydratase (102 aa).

It belongs to the pterin-4-alpha-carbinolamine dehydratase family.

The enzyme catalyses (4aS,6R)-4a-hydroxy-L-erythro-5,6,7,8-tetrahydrobiopterin = (6R)-L-erythro-6,7-dihydrobiopterin + H2O. This Psychromonas ingrahamii (strain DSM 17664 / CCUG 51855 / 37) protein is Putative pterin-4-alpha-carbinolamine dehydratase.